Here is a 205-residue protein sequence, read N- to C-terminus: Phosphoribosyl-dephospho-CoA transferase (205 aa).

Active-site residues include Asp-134 and Asp-136.

It belongs to the MdcG family.

The catalysed reaction is apo-[malonate decarboxylase ACP] + 2'-(5''-triphospho-alpha-D-ribosyl)-3'-dephospho-CoA = holo-[malonate decarboxylase ACP] + diphosphate. Its function is as follows. Transfers 2'-(5-triphosphoribosyl)-3'-dephosphocoenzyme-A to the apo-[acyl-carrier-protein] of the malonate decarboxylase to yield holo-[acyl-carrier-protein]. This Klebsiella pneumoniae (strain 342) protein is Phosphoribosyl-dephospho-CoA transferase.